A 447-amino-acid chain; its full sequence is Pentatricopeptide repeat-containing protein At3g53170 (447 aa).

PPR repeat units lie at residues 93 to 127 (RCKT…GLKP), 128 to 158 (TIDV…MKSV), 164 to 198 (DVFT…GVGC), 199 to 233 (STVT…GDSL), 235 to 269 (DVCT…GVQP), 270 to 304 (DITT…FFSL), 305 to 339 (TTVT…GVKP), 340 to 374 (NSIT…DVVL), 375 to 409 (DTPF…KCKP), and 410 to 444 (DKIT…GENL).

The protein belongs to the PPR family. P subfamily.

The polypeptide is Pentatricopeptide repeat-containing protein At3g53170 (Arabidopsis thaliana (Mouse-ear cress)).